The sequence spans 158 residues: uncharacterized protein (158 aa).

This is an uncharacterized protein from Methanocaldococcus jannaschii (strain ATCC 43067 / DSM 2661 / JAL-1 / JCM 10045 / NBRC 100440) (Methanococcus jannaschii).